Consider the following 474-residue polypeptide: tRNA-2-methylthio-N(6)-dimethylallyladenosine synthase (474 aa).

Positions 3-120 (KKLHIKTWGC…LPDMIEQVRR (118 aa)) constitute an MTTase N-terminal domain. [4Fe-4S] cluster contacts are provided by Cys-12, Cys-49, Cys-83, Cys-157, Cys-161, and Cys-164. A Radical SAM core domain is found at 143–375 (RAEGPTAFVS…QDRITQQAMR (233 aa)). In terms of domain architecture, TRAM spans 378-441 (RHMMGTVQRI…TNSLRGKFIR (64 aa)).

It belongs to the methylthiotransferase family. MiaB subfamily. As to quaternary structure, monomer. [4Fe-4S] cluster is required as a cofactor.

It localises to the cytoplasm. The enzyme catalyses N(6)-dimethylallyladenosine(37) in tRNA + (sulfur carrier)-SH + AH2 + 2 S-adenosyl-L-methionine = 2-methylsulfanyl-N(6)-dimethylallyladenosine(37) in tRNA + (sulfur carrier)-H + 5'-deoxyadenosine + L-methionine + A + S-adenosyl-L-homocysteine + 2 H(+). Functionally, catalyzes the methylthiolation of N6-(dimethylallyl)adenosine (i(6)A), leading to the formation of 2-methylthio-N6-(dimethylallyl)adenosine (ms(2)i(6)A) at position 37 in tRNAs that read codons beginning with uridine. This Shewanella sp. (strain MR-4) protein is tRNA-2-methylthio-N(6)-dimethylallyladenosine synthase.